The following is a 104-amino-acid chain: uncharacterized protein (104 aa).

This is an uncharacterized protein from Methanocaldococcus jannaschii (strain ATCC 43067 / DSM 2661 / JAL-1 / JCM 10045 / NBRC 100440) (Methanococcus jannaschii).